Consider the following 792-residue polypeptide: Pentatricopeptide repeat-containing protein At4g30700 (792 aa).

16 PPR repeats span residues D51–P81, D82–P117, N118–S152, E153–K183, D184–R218, D220–S254, H255–P285, D286–L320, R321–S352, H353–K383, S384–P418, N419–S453, S454–K484, N485–P519, T520–P555, and S556–E586. The interval V591 to G666 is type E motif. Residues E667–R697 form a type E(+) motif region. The interval E698–W792 is type DYW motif.

This sequence belongs to the PPR family. PCMP-H subfamily.

The polypeptide is Pentatricopeptide repeat-containing protein At4g30700 (DYW9) (Arabidopsis thaliana (Mouse-ear cress)).